A 310-amino-acid chain; its full sequence is Putative S-adenosyl-L-methionine-dependent methyltransferase MAB_4587c (310 aa).

Residues Asp126 and 155 to 156 (DL) contribute to the S-adenosyl-L-methionine site.

The protein belongs to the UPF0677 family.

Its function is as follows. Exhibits S-adenosyl-L-methionine-dependent methyltransferase activity. The sequence is that of Putative S-adenosyl-L-methionine-dependent methyltransferase MAB_4587c from Mycobacteroides abscessus (strain ATCC 19977 / DSM 44196 / CCUG 20993 / CIP 104536 / JCM 13569 / NCTC 13031 / TMC 1543 / L948) (Mycobacterium abscessus).